We begin with the raw amino-acid sequence, 452 residues long: Scaffold protein ILK (452 aa).

ANK repeat units follow at residues 2-30, 31-63, 64-96, 97-129, and 130-174; these read DDIF…LNQG, DDHG…INVM, NRGD…INAV, NEHG…VSIA, and NKYS…GTTR. A Protein kinase domain is found at 193–446; the sequence is LSLSQKLNEN…PKFDMIVPIL (254 aa). Residues asparagine 200, asparagine 202, serine 204, histidine 270, methionine 272, and asparagine 279 each coordinate ATP. Aspartate 339 serves as a coordination point for Mg(2+). Lysine 341 contacts ATP. A Nuclear localization signal motif is present at residues 363 to 371; it reads KKPEEINRR.

It belongs to the protein kinase superfamily. TKL Ser/Thr protein kinase family. As to quaternary structure, interacts with PXN/PAXILLIN (via LD motif 4).

Its subcellular location is the cell junction. It is found in the focal adhesion. It localises to the cell membrane. The protein localises to the cell projection. The protein resides in the lamellipodium. Its subcellular location is the cytoplasm. It is found in the myofibril. It localises to the sarcomere. The protein localises to the nucleus. The protein resides in the cytoskeleton. Its subcellular location is the microtubule organizing center. It is found in the centrosome. It localises to the cell cortex. Scaffold protein which mediates protein-protein interactions during a range of cellular events including focal adhesion assembly, cell adhesion and cell migration. This Gallus gallus (Chicken) protein is Scaffold protein ILK.